A 220-amino-acid polypeptide reads, in one-letter code: Fructose-6-phosphate aldolase 1 (220 aa).

Residue Lys85 is the Schiff-base intermediate with substrate of the active site.

It belongs to the transaldolase family. Type 3A subfamily. Homodecamer. Five subunits are arranged as a pentamer, and two ring-like pentamers pack like a donut to form the decamer.

It localises to the cytoplasm. It carries out the reaction beta-D-fructose 6-phosphate = dihydroxyacetone + D-glyceraldehyde 3-phosphate. Inhibited by glycerol, inorganic phosphate and arabinose 5-phosphate. In terms of biological role, catalyzes the reversible formation of fructose 6-phosphate from dihydroxyacetone (DHA) and D-glyceraldehyde 3-phosphate via an aldolization reaction. Can utilize several aldehydes as acceptor compounds in vitro, and hydroxyacetone (HA) or 1-hydroxy-butan-2-one as alternative donor substrate. Is also able to catalyze the direct stereoselective self-aldol addition of glycolaldehyde to furnish D-(-)-threose, and cross-aldol reactions of glycolaldehyde to other aldehyde acceptors. Is not able to cleave fructose, fructose 1-phosphate, glucose 6-phosphate, sedoheptulose 1,7-bisphosphate, xylulose 5-phosphate, ribulose 5-phosphate, and fructose 1,6-bisphosphate; cannot use dihydroxyacetone phosphate as donor compound nor D-glyceraldehyde as acceptor. Does not display transaldolase activity. The polypeptide is Fructose-6-phosphate aldolase 1 (fsaA) (Escherichia coli (strain K12)).